Here is a 297-residue protein sequence, read N- to C-terminus: UDP-N-acetylenolpyruvoylglucosamine reductase (297 aa).

The FAD-binding PCMH-type domain maps to 27–192 (IGGPADALLE…LRAAYRLHPG (166 aa)). Arg170 is a catalytic residue. Ser220 acts as the Proton donor in catalysis. Glu290 is a catalytic residue.

This sequence belongs to the MurB family. FAD serves as cofactor.

Its subcellular location is the cytoplasm. The catalysed reaction is UDP-N-acetyl-alpha-D-muramate + NADP(+) = UDP-N-acetyl-3-O-(1-carboxyvinyl)-alpha-D-glucosamine + NADPH + H(+). It participates in cell wall biogenesis; peptidoglycan biosynthesis. Its function is as follows. Cell wall formation. The polypeptide is UDP-N-acetylenolpyruvoylglucosamine reductase (Rubrobacter xylanophilus (strain DSM 9941 / JCM 11954 / NBRC 16129 / PRD-1)).